The following is a 28-amino-acid chain: Conotoxin as14b (28 aa).

2 disulfides stabilise this stretch: Cys-7–Cys-27 and Cys-11–Cys-23.

This sequence belongs to the conotoxin L superfamily. Expressed by the venom duct.

It localises to the secreted. In terms of biological role, in vivo, intracranial injection elicits scratching and grooming activity in mice, and causes body and rear limb extension and tail curling immediately upon injection. The sequence is that of Conotoxin as14b from Conus cancellatus (Cancellate cone).